The sequence spans 952 residues: Aminopeptidase 2, mitochondrial (952 aa).

The transit peptide at 1 to 52 (MPIVRWLLLKSAVRGSSLIGKAHPCLRSIAAHPRYLSNVYSPPAGVSRSLRI) directs the protein to the mitochondrion. Residues glutamate 228 and 360–364 (GAMEN) each bind substrate. N-linked (GlcNAc...) asparagine glycosylation occurs at asparagine 381. Histidine 396 contributes to the Zn(2+) binding site. Glutamate 397 (proton acceptor) is an active-site residue. Histidine 400 and glutamate 419 together coordinate Zn(2+). Residue asparagine 713 is glycosylated (N-linked (GlcNAc...) asparagine).

It belongs to the peptidase M1 family. It depends on Zn(2+) as a cofactor.

It is found in the periplasm. It localises to the cytoplasm. The protein resides in the mitochondrion. Its function is as follows. Involved in the cellular supply of leucine from externally offered leucine-containing dipeptide substrates. The polypeptide is Aminopeptidase 2, mitochondrial (APE2) (Saccharomyces cerevisiae (strain ATCC 204508 / S288c) (Baker's yeast)).